We begin with the raw amino-acid sequence, 891 residues long: Fanconi-associated nuclease 1 homolog (891 aa).

Mn(2+) contacts are provided by Glu-712, Asp-833, Glu-852, and Val-853. The 115-residue stretch at 770–884 (GMAEEILIIS…GFNVEICKVR (115 aa)) folds into the VRR-NUC domain.

This sequence belongs to the FAN1 family. Mn(2+) is required as a cofactor. Mg(2+) serves as cofactor.

It is found in the nucleus. It catalyses the reaction Hydrolytically removes 5'-nucleotides successively from the 3'-hydroxy termini of 3'-hydroxy-terminated oligonucleotides.. Nuclease required for the repair of DNA interstrand cross-links (ICLs). Acts as a 5'-3' exonuclease that anchors at a cut end of DNA and cleaves DNA successively at every third nucleotide, allowing to excise an ICL from one strand through flanking incisions. May act upstream of the helicase RECQL4A and the ATPase RAD5A, which is involved in error-free post-replicative repair. Functions independently of MUS81 pathway, but in a similar pathway with RECQ4A, RAD5A and MFH1 in ICL repair. This chain is Fanconi-associated nuclease 1 homolog, found in Arabidopsis thaliana (Mouse-ear cress).